The sequence spans 316 residues: ATP synthase gamma chain (316 aa).

Belongs to the ATPase gamma chain family. F-type ATPases have 2 components, CF(1) - the catalytic core - and CF(0) - the membrane proton channel. CF(1) has five subunits: alpha(3), beta(3), gamma(1), delta(1), epsilon(1). CF(0) has three main subunits: a, b and c.

It localises to the cellular thylakoid membrane. Functionally, produces ATP from ADP in the presence of a proton gradient across the membrane. The gamma chain is believed to be important in regulating ATPase activity and the flow of protons through the CF(0) complex. The chain is ATP synthase gamma chain from Prochlorococcus marinus (strain MIT 9215).